Here is a 505-residue protein sequence, read N- to C-terminus: ATP synthase subunit beta (505 aa).

Residue 157 to 164 (GGAGVGKT) participates in ATP binding.

This sequence belongs to the ATPase alpha/beta chains family. F-type ATPases have 2 components, CF(1) - the catalytic core - and CF(0) - the membrane proton channel. CF(1) has five subunits: alpha(3), beta(3), gamma(1), delta(1), epsilon(1). CF(0) has three main subunits: a(1), b(2) and c(9-12). The alpha and beta chains form an alternating ring which encloses part of the gamma chain. CF(1) is attached to CF(0) by a central stalk formed by the gamma and epsilon chains, while a peripheral stalk is formed by the delta and b chains.

It is found in the cell inner membrane. The catalysed reaction is ATP + H2O + 4 H(+)(in) = ADP + phosphate + 5 H(+)(out). Functionally, produces ATP from ADP in the presence of a proton gradient across the membrane. The catalytic sites are hosted primarily by the beta subunits. The chain is ATP synthase subunit beta from Bacteroides thetaiotaomicron (strain ATCC 29148 / DSM 2079 / JCM 5827 / CCUG 10774 / NCTC 10582 / VPI-5482 / E50).